Consider the following 124-residue polypeptide: Biogenesis of lysosome-related organelles complex 1 subunit CNL1 (124 aa).

The interval Met1–Asp20 is disordered. The stretch at Ile75–Val98 forms a coiled coil.

Belongs to the BLOC1S4 family. Component of the biogenesis of lysosome-related organelles complex-1 (BLOC-1).

It is found in the cytoplasm. Component of the biogenesis of lysosome-related organelles complex-1 (BLOC-1), a complex that is involved in endosomal cargo sorting. This chain is Biogenesis of lysosome-related organelles complex 1 subunit CNL1 (CLN1), found in Kluyveromyces lactis (strain ATCC 8585 / CBS 2359 / DSM 70799 / NBRC 1267 / NRRL Y-1140 / WM37) (Yeast).